A 147-amino-acid polypeptide reads, in one-letter code: SsrA-binding protein (147 aa).

Belongs to the SmpB family.

Its subcellular location is the cytoplasm. Its function is as follows. Required for rescue of stalled ribosomes mediated by trans-translation. Binds to transfer-messenger RNA (tmRNA), required for stable association of tmRNA with ribosomes. tmRNA and SmpB together mimic tRNA shape, replacing the anticodon stem-loop with SmpB. tmRNA is encoded by the ssrA gene; the 2 termini fold to resemble tRNA(Ala) and it encodes a 'tag peptide', a short internal open reading frame. During trans-translation Ala-aminoacylated tmRNA acts like a tRNA, entering the A-site of stalled ribosomes, displacing the stalled mRNA. The ribosome then switches to translate the ORF on the tmRNA; the nascent peptide is terminated with the 'tag peptide' encoded by the tmRNA and targeted for degradation. The ribosome is freed to recommence translation, which seems to be the essential function of trans-translation. This is SsrA-binding protein from Thermosipho melanesiensis (strain DSM 12029 / CIP 104789 / BI429).